Reading from the N-terminus, the 792-residue chain is Probable beta-D-xylosidase 6 (792 aa).

The first 18 residues, 1-18 (MNLQLTLISLLFFTSAIA), serve as a signal peptide directing secretion. N-linked (GlcNAc...) asparagine glycosylation is found at asparagine 44, asparagine 104, asparagine 124, and asparagine 239. The active site involves aspartate 309. N-linked (GlcNAc...) asparagine glycosylation is found at asparagine 444 and asparagine 618.

The protein belongs to the glycosyl hydrolase 3 family.

The protein resides in the secreted. Its subcellular location is the extracellular space. It localises to the extracellular matrix. This is Probable beta-D-xylosidase 6 (BXL6) from Arabidopsis thaliana (Mouse-ear cress).